The primary structure comprises 322 residues: Acetyl-coenzyme A carboxylase carboxyl transferase subunit alpha (322 aa).

One can recognise a CoA carboxyltransferase C-terminal domain in the interval 39–293 (RLQKKSQALT…RRALTDTLAE (255 aa)).

This sequence belongs to the AccA family. Acetyl-CoA carboxylase is a heterohexamer composed of biotin carboxyl carrier protein (AccB), biotin carboxylase (AccC) and two subunits each of ACCase subunit alpha (AccA) and ACCase subunit beta (AccD).

Its subcellular location is the cytoplasm. The catalysed reaction is N(6)-carboxybiotinyl-L-lysyl-[protein] + acetyl-CoA = N(6)-biotinyl-L-lysyl-[protein] + malonyl-CoA. The protein operates within lipid metabolism; malonyl-CoA biosynthesis; malonyl-CoA from acetyl-CoA: step 1/1. Component of the acetyl coenzyme A carboxylase (ACC) complex. First, biotin carboxylase catalyzes the carboxylation of biotin on its carrier protein (BCCP) and then the CO(2) group is transferred by the carboxyltransferase to acetyl-CoA to form malonyl-CoA. The sequence is that of Acetyl-coenzyme A carboxylase carboxyl transferase subunit alpha from Thiobacillus denitrificans (strain ATCC 25259 / T1).